Consider the following 403-residue polypeptide: S-adenosylmethionine synthase (403 aa).

H16 serves as a coordination point for ATP. D18 serves as a coordination point for Mg(2+). E44 contacts K(+). Residues E57 and Q100 each coordinate L-methionine. The flexible loop stretch occupies residues 100 to 110 (QSNDIAQGVDH). ATP-binding positions include 167–169 (DAK), 238–239 (RF), D247, 253–254 (RK), A270, and K274. An L-methionine-binding site is contributed by D247. K278 provides a ligand contact to L-methionine.

It belongs to the AdoMet synthase family. As to quaternary structure, homotetramer; dimer of dimers. Mg(2+) is required as a cofactor. Requires K(+) as cofactor.

Its subcellular location is the cytoplasm. It catalyses the reaction L-methionine + ATP + H2O = S-adenosyl-L-methionine + phosphate + diphosphate. It participates in amino-acid biosynthesis; S-adenosyl-L-methionine biosynthesis; S-adenosyl-L-methionine from L-methionine: step 1/1. Catalyzes the formation of S-adenosylmethionine (AdoMet) from methionine and ATP. The overall synthetic reaction is composed of two sequential steps, AdoMet formation and the subsequent tripolyphosphate hydrolysis which occurs prior to release of AdoMet from the enzyme. The polypeptide is S-adenosylmethionine synthase (Verminephrobacter eiseniae (strain EF01-2)).